The following is a 45-amino-acid chain: Cytochrome b559 subunit beta (45 aa).

Residues 20-36 (WLAVHTLAVPTVFFLGA) traverse the membrane as a helical segment. H24 serves as a coordination point for heme.

The protein belongs to the PsbE/PsbF family. In terms of assembly, heterodimer of an alpha subunit and a beta subunit. PSII is composed of 1 copy each of membrane proteins PsbA, PsbB, PsbC, PsbD, PsbE, PsbF, PsbH, PsbI, PsbJ, PsbK, PsbL, PsbM, PsbT, PsbX, PsbY, PsbZ, Psb30/Ycf12, peripheral proteins PsbO, CyanoQ (PsbQ), PsbU, PsbV and a large number of cofactors. It forms dimeric complexes. Requires heme b as cofactor.

It is found in the cellular thylakoid membrane. In terms of biological role, this b-type cytochrome is tightly associated with the reaction center of photosystem II (PSII). PSII is a light-driven water:plastoquinone oxidoreductase that uses light energy to abstract electrons from H(2)O, generating O(2) and a proton gradient subsequently used for ATP formation. It consists of a core antenna complex that captures photons, and an electron transfer chain that converts photonic excitation into a charge separation. This is Cytochrome b559 subunit beta from Trichormus variabilis (strain ATCC 29413 / PCC 7937) (Anabaena variabilis).